Reading from the N-terminus, the 222-residue chain is Cytidylate kinase (222 aa).

Residue 10-18 (GPAGAGKST) participates in ATP binding.

This sequence belongs to the cytidylate kinase family. Type 1 subfamily.

The protein localises to the cytoplasm. It catalyses the reaction CMP + ATP = CDP + ADP. It carries out the reaction dCMP + ATP = dCDP + ADP. This is Cytidylate kinase from Halalkalibacterium halodurans (strain ATCC BAA-125 / DSM 18197 / FERM 7344 / JCM 9153 / C-125) (Bacillus halodurans).